We begin with the raw amino-acid sequence, 148 residues long: Large ribosomal subunit protein uL15 (148 aa).

The segment at 1-61 is disordered; the sequence is MELNELRPAV…GGQMPMQRRL (61 aa). The span at 30-39 shows a compositional bias: basic residues; sequence TATKGHKGQK.

Belongs to the universal ribosomal protein uL15 family. As to quaternary structure, part of the 50S ribosomal subunit.

In terms of biological role, binds to the 23S rRNA. The polypeptide is Large ribosomal subunit protein uL15 (Geobacter sulfurreducens (strain ATCC 51573 / DSM 12127 / PCA)).